Here is a 109-residue protein sequence, read N- to C-terminus: Large ribosomal subunit protein uL24 (109 aa).

The protein belongs to the universal ribosomal protein uL24 family. Part of the 50S ribosomal subunit.

One of two assembly initiator proteins, it binds directly to the 5'-end of the 23S rRNA, where it nucleates assembly of the 50S subunit. In terms of biological role, one of the proteins that surrounds the polypeptide exit tunnel on the outside of the subunit. This chain is Large ribosomal subunit protein uL24, found in Rickettsia massiliae (strain Mtu5).